The primary structure comprises 319 residues: uncharacterized protein (319 aa).

A signal peptide spans methionine 1–alanine 23.

The protein to H.influenzae HI_0755.

This is an uncharacterized protein from Escherichia coli (strain K12).